An 884-amino-acid chain; its full sequence is Translation initiation factor IF-2 (884 aa).

A disordered region spans residues 93-288 (VNTPEAEQAK…KGKRKPSTLQ (196 aa)). A compositionally biased stretch (basic and acidic residues) spans 99–209 (EQAKAEEQAQ…KMAAENEGKW (111 aa)). The span at 216–229 (QTESADYHVTTSQH) shows a compositional bias: polar residues. Positions 231–246 (RAAEDENDAKVEGDRR) are enriched in basic and acidic residues. Residues 247–261 (SRTRGGKATKQKKGN) are compositionally biased toward basic residues. Basic and acidic residues predominate over residues 262–275 (KLSESKADREEARA). One can recognise a tr-type G domain in the interval 383–552 (HRAPVVTIMG…LLQAEVLELK (170 aa)). The G1 stretch occupies residues 392 to 399 (GHVDHGKT). 392-399 (GHVDHGKT) contributes to the GTP binding site. The segment at 417 to 421 (GITQH) is G2. The tract at residues 438–441 (DTPG) is G3. Residues 438-442 (DTPGH) and 492-495 (NKID) each bind GTP. A G4 region spans residues 492–495 (NKID). Residues 528 to 530 (SAK) form a G5 region.

It belongs to the TRAFAC class translation factor GTPase superfamily. Classic translation factor GTPase family. IF-2 subfamily.

The protein localises to the cytoplasm. Functionally, one of the essential components for the initiation of protein synthesis. Protects formylmethionyl-tRNA from spontaneous hydrolysis and promotes its binding to the 30S ribosomal subunits. Also involved in the hydrolysis of GTP during the formation of the 70S ribosomal complex. The protein is Translation initiation factor IF-2 of Yersinia pestis bv. Antiqua (strain Angola).